We begin with the raw amino-acid sequence, 456 residues long: Endoglucanase A (456 aa).

The N-terminal stretch at 1–30 is a signal peptide; sequence MSRIRRFLATALAAATAGVGAIVTAIASAG. Residues 31–322 form a catalytic region; the sequence is PAHAYDSPFY…RAYELAMNAA (292 aa). The active site involves Asp113. 2 disulfide bridges follow: Cys114–Cys159 and Cys267–Cys302. Asp151 acts as the Proton donor in catalysis. The interval 255-280 is disordered; it reads SRNGNGPLGSEWCDPPGRATGTWSTT. Asp300 functions as the Nucleophile in the catalytic mechanism. Residues 321–358 are disordered; sequence AAPPTYSPSPTPSTPSPSPSQSDPGSPSPSPSQPPAGR. The segment at 323–355 is linker ('hinge') (Pro-Ser box); that stretch reads PPTYSPSPTPSTPSPSPSQSDPGSPSPSPSQPP. The segment covering 325–338 has biased composition (pro residues); it reads TYSPSPTPSTPSPS. Residues 353–456 enclose the CBM2 domain; the sequence is QPPAGRACEA…LSSSITCSAS (104 aa). Cys360 and Cys453 are oxidised to a cystine.

It belongs to the glycosyl hydrolase 6 (cellulase B) family.

It carries out the reaction Endohydrolysis of (1-&gt;4)-beta-D-glucosidic linkages in cellulose, lichenin and cereal beta-D-glucans.. This Thermobispora bispora (Microbispora bispora) protein is Endoglucanase A (celA).